Consider the following 192-residue polypeptide: Ion-translocating oxidoreductase complex subunit A (192 aa).

6 helical membrane passes run L5 to L25, I39 to V59, L65 to V85, A102 to L122, A134 to M154, and A171 to V191.

Belongs to the NqrDE/RnfAE family. As to quaternary structure, the complex is composed of six subunits: RnfA, RnfB, RnfC, RnfD, RnfE and RnfG.

The protein localises to the cell inner membrane. In terms of biological role, part of a membrane-bound complex that couples electron transfer with translocation of ions across the membrane. In Shewanella sp. (strain ANA-3), this protein is Ion-translocating oxidoreductase complex subunit A.